We begin with the raw amino-acid sequence, 572 residues long: Glutathione hydrolase 1 (572 aa).

A signal peptide spans 1–22 (MSLVRTVTIVLFIIAFLQNAAA). L-glutamate is bound at residue R99. Residues N171 and N222 are each glycosylated (N-linked (GlcNAc...) asparagine). T368 functions as the Nucleophile in the catalytic mechanism. L-glutamate is bound by residues T386, N388, E407, D410, 440 to 441 (SS), and 461 to 462 (GG). N505 carries an N-linked (GlcNAc...) asparagine glycan. Residues 552 to 572 (GGRSELVAVSDPRKGGFPSGY) are disordered.

It belongs to the gamma-glutamyltransferase family. Expressed in embryo, roots and leaves. In mature plants, expression is restricted to vascular tissues of roots, leaves, flowers and siliques.

It localises to the secreted. Its subcellular location is the extracellular space. It is found in the apoplast. The enzyme catalyses an N-terminal (5-L-glutamyl)-[peptide] + an alpha-amino acid = 5-L-glutamyl amino acid + an N-terminal L-alpha-aminoacyl-[peptide]. The catalysed reaction is glutathione + H2O = L-cysteinylglycine + L-glutamate. It catalyses the reaction an S-substituted glutathione + H2O = an S-substituted L-cysteinylglycine + L-glutamate. The protein operates within sulfur metabolism; glutathione metabolism. Its function is as follows. May play a role in preventing oxidative stress by metabolizing extracellular oxidized glutathione (GSSG). The polypeptide is Glutathione hydrolase 1 (GGT1) (Arabidopsis thaliana (Mouse-ear cress)).